The following is a 308-amino-acid chain: Pantothenate kinase (308 aa).

91–98 (GSVAVGKS) is an ATP binding site.

It belongs to the prokaryotic pantothenate kinase family.

The protein resides in the cytoplasm. The catalysed reaction is (R)-pantothenate + ATP = (R)-4'-phosphopantothenate + ADP + H(+). It functions in the pathway cofactor biosynthesis; coenzyme A biosynthesis; CoA from (R)-pantothenate: step 1/5. This Lacticaseibacillus paracasei (strain ATCC 334 / BCRC 17002 / CCUG 31169 / CIP 107868 / KCTC 3260 / NRRL B-441) (Lactobacillus paracasei) protein is Pantothenate kinase.